The chain runs to 1290 residues: 1-phosphatidylinositol 4,5-bisphosphate phosphodiesterase gamma-1 (1290 aa).

A2 is subject to N-acetylalanine. In terms of domain architecture, PH 1 spans 27–142; sequence RSLEVGTVMT…WIKGLTWLME (116 aa). Positions 152–187 constitute an EF-hand domain; that stretch reads QIERWLRKQFYSVDRNREDRISAKDLKNMLSQVNYR. Ca(2+) contacts are provided by D165, N167, E169, R171, and D176. A PI-PLC X-box domain is found at 320–464; sequence DTMNNPLSHY…LKRKILIKHK (145 aa). Active-site residues include H335 and H380. A PH 2; first part domain is found at 489–523; that stretch reads SIKNGILYLEDPVNHEWYPHYFVLTSSKIYYSEET. Y506 carries the post-translational modification Phosphotyrosine. The disordered stretch occupies residues 522–544; sequence ETSSDQGNEDEEEPKEVSSSTEL. 2 SH2 domains span residues 550–657 and 668–756; these read WFHG…SEPV and WYHA…RYPI. Residue Y771 is modified to Phosphotyrosine; by SYK. Residue Y775 is modified to Phosphotyrosine. Y783 carries the phosphotyrosine; by ITK, SYK and TXK modification. The SH3 domain maps to 791 to 851; it reads TFKCAVKALF…PSNYVEEMVN (61 aa). In terms of domain architecture, PH 2; second part spans 895–931; it reads FVFSISMASVAHWSLDVAADSQEELQDWVKKIREVAQ. Residues 953-1070 form the PI-PLC Y-box domain; that stretch reads LSELVVYCRP…GYVLQPSTMR (118 aa). Y977 is modified (phosphotyrosine). Positions 1071–1194 constitute a C2 domain; it reads DEAFDPFDKS…TGYRAVPLKN (124 aa). Phosphoserine occurs at positions 1221, 1222, 1227, 1233, and 1248. Phosphotyrosine is present on Y1253. At S1263 the chain carries Phosphoserine. The segment at 1271-1290 is disordered; it reads FDSRERRAPRRTRVNGDNRL.

In terms of assembly, interacts with AGAP2 via its SH3 domain. Interacts (via SH2 domain) with RET. Interacts with FLT1 (tyrosine-phosphorylated). Interacts (via SH2 domain) with FGFR1, FGFR2, FGFR3 and FGFR4 (phosphorylated). Interacts with LAT (phosphorylated) upon TCR activation. Interacts (via SH3 domain) with the Pro-rich domain of TNK1. Associates with BLNK, VAV1, GRB2 and NCK1 in a B-cell antigen receptor-dependent fashion. Interacts with CBLB in activated T-cells; which inhibits phosphorylation. Interacts with SHB. Interacts (via SH3 domain) with the Arg/Gly-rich-flanked Pro-rich domains of KHDRBS1/SAM68. This interaction is selectively regulated by arginine methylation of KHDRBS1/SAM68. Interacts with INPP5D/SHIP1, THEMIS and CLNK. Interacts with AXL, FLT4 and KIT. Interacts with RALGPS1. Interacts (via the SH2 domains) with VIL1 (phosphorylated at C-terminus tyrosine phosphorylation sites). Interacts (via SH2 domain) with PDGFRA and PDGFRB (tyrosine phosphorylated). Interacts with PIP5K1C. Interacts with NTRK1 and NTRK2 (phosphorylated upon ligand-binding). Interacts with SYK; activates PLCG1. Interacts with GRB2, LAT and THEMIS upon TCR activation in thymocytes. Interacts with TESPA1; the association is increased with prolonged stimulation of the TCR and may facilitate the assembly of the LAT signalosome. Interacts (via C-terminal proline-rich domain (PRD)) with PLCG1 (via SH3 domain); this interaction leads to guanine nucleotide exchange from PlCG1 to DNM1 and enhances DNM1-dependent endocytosis. (Microbial infection) Interacts (via SH3 domain) with HEV ORF3 protein. It depends on Ca(2+) as a cofactor. Post-translationally, tyrosine phosphorylated in response to signaling via activated FLT3, KIT and PDGFRA. Tyrosine phosphorylated by activated FGFR1, FGFR2, FGFR3 and FGFR4. Tyrosine phosphorylated by activated FLT1 and KDR. Tyrosine phosphorylated by activated PDGFRB. The receptor-mediated activation of PLCG1 involves its phosphorylation by tyrosine kinases, in response to ligation of a variety of growth factor receptors and immune system receptors. For instance, SYK phosphorylates and activates PLCG1 in response to ligation of the B-cell receptor. May be dephosphorylated by PTPRJ. Phosphorylated by ITK and TXK on Tyr-783 upon TCR activation in T-cells. Ubiquitinated by CBLB in activated T-cells.

It is found in the cell projection. The protein resides in the lamellipodium. It localises to the ruffle. The catalysed reaction is a 1,2-diacyl-sn-glycero-3-phospho-(1D-myo-inositol-4,5-bisphosphate) + H2O = 1D-myo-inositol 1,4,5-trisphosphate + a 1,2-diacyl-sn-glycerol + H(+). It carries out the reaction a 1,2-diacyl-sn-glycero-3-phospho-(1D-myo-inositol) + H2O = 1D-myo-inositol 1-phosphate + a 1,2-diacyl-sn-glycerol + H(+). With respect to regulation, activated by phosphorylation on tyrosine residues. Mediates the production of the second messenger molecules diacylglycerol (DAG) and inositol 1,4,5-trisphosphate (IP3). Plays an important role in the regulation of intracellular signaling cascades. Becomes activated in response to ligand-mediated activation of receptor-type tyrosine kinases, such as PDGFRA, PDGFRB, EGFR, FGFR1, FGFR2, FGFR3 and FGFR4. Plays a role in actin reorganization and cell migration. Guanine nucleotide exchange factor that binds the GTPase DNM1 and catalyzes the dissociation of GDP, allowing a GTP molecule to bind in its place, therefore enhancing DNM1-dependent endocytosis. The protein is 1-phosphatidylinositol 4,5-bisphosphate phosphodiesterase gamma-1 of Homo sapiens (Human).